Here is an 80-residue protein sequence, read N- to C-terminus: Raniseptin-1 (80 aa).

The N-terminal stretch at 1 to 22 is a signal peptide; it reads MAFLKKSLFLVLFLGIVSLSIC. A propeptide spanning residues 23–49 is cleaved from the precursor; the sequence is EEEKREGEEEEKQEEENEELSEEELRE.

The protein belongs to the frog skin active peptide (FSAP) family. Dermaseptin subfamily. In terms of tissue distribution, expressed by the skin glands.

It localises to the secreted. Functionally, has antibacterial activity against the Gram-negative bacteria E.coli ATCC 25922 (MIC=5 uM), P.aeruginosa ATCC 27853 (MIC=10 uM) and X.citri (MIC&lt; 2 uM), and the Gram-positive bacterium S.aureus ATCC 29313 (MIC=20 uM). Does not have hemolytic activity against human erythrocytes. The chain is Raniseptin-1 from Boana raniceps (Chaco tree frog).